The primary structure comprises 300 residues: Ecto-ADP-ribosyltransferase 4 (300 aa).

Positions 1 to 23 (MALWLPGGQLTLLLLLWVQQTPA) are cleaved as a signal peptide. Residues 24-269 (GSTEAPLKVD…QLLKACSKKC (246 aa)) lie on the Extracellular side of the membrane. Cystine bridges form between cysteine 48–cysteine 259 and cysteine 161–cysteine 210. The TR mART core domain maps to 70–255 (KYYSRAWQKA…INLRSAGNMS (186 aa)). 2 N-linked (GlcNAc...) asparagine glycosylation sites follow: asparagine 110 and asparagine 157. Residue glutamine 185 coordinates NAD(+). An N-linked (GlcNAc...) asparagine glycan is attached at asparagine 201. Serine 219 is an NAD(+) binding site. N-linked (GlcNAc...) asparagine glycosylation is present at asparagine 253. Alanine 264 is lipidated: GPI-anchor amidated alanine. A propeptide spans 265–300 (CSKKCAPAPVVIGCLFLVTVVISSKSRAQRNLLAPF) (removed in mature form). Residues 270 to 286 (APAPVVIGCLFLVTVVI) traverse the membrane as a helical segment. The Cytoplasmic segment spans residues 287 to 300 (SSKSRAQRNLLAPF).

This sequence belongs to the Arg-specific ADP-ribosyltransferase family.

It is found in the membrane. The protein localises to the cell membrane. It carries out the reaction L-arginyl-[protein] + NAD(+) = N(omega)-(ADP-D-ribosyl)-L-arginyl-[protein] + nicotinamide + H(+). The sequence is that of Ecto-ADP-ribosyltransferase 4 (Art4) from Mus musculus (Mouse).